The chain runs to 398 residues: MQSSTSAVIEKTEKYGAKNYHPLPIVISEAKGVWVKDPEGRKYLDMLSAYSAVNQGHCHPKIIQALKDQADKITLTSRAFHNDQLAPFYEKVSKLTGKNMLLPMNTGAEAVETAVKAARRWAYDVKGVPDNQAEIIVCEDNFHGRTMTAVSLSSNDEYKRGFGPMLPGIKVIPYGDLEALKAAITSHTAAFLVEPIQGEAGIRIPQEGFLKEAYALCKRENVLFIADEIQSGLGRSGKWFACDWEDVKPDMYILGKALGGGVFPISVVCADRDILGVFEPGSHGSTFGGNPLACAVSIAALEVLEEEKLVERSYEYGNYLLTKLKEIDNPIIKDVRGRGLFIGVELHEPARKYCEQLKEEGLLCKETHETVIRFAPPLVISKEDLDWAIEKIYYVLKP.

At Lys256 the chain carries N6-(pyridoxal phosphate)lysine.

Belongs to the class-III pyridoxal-phosphate-dependent aminotransferase family. OAT subfamily. The cofactor is pyridoxal 5'-phosphate.

It is found in the cytoplasm. It catalyses the reaction a 2-oxocarboxylate + L-ornithine = L-glutamate 5-semialdehyde + an L-alpha-amino acid. Its pathway is amino-acid biosynthesis; L-proline biosynthesis; L-glutamate 5-semialdehyde from L-ornithine: step 1/1. In terms of biological role, catalyzes the interconversion of ornithine to glutamate semialdehyde. This chain is Ornithine aminotransferase, found in Halalkalibacterium halodurans (strain ATCC BAA-125 / DSM 18197 / FERM 7344 / JCM 9153 / C-125) (Bacillus halodurans).